The following is a 614-amino-acid chain: Zinc metalloproteinase-disintegrin-like HR1b (614 aa).

Residues 1–20 form the signal peptide; that stretch reads MIQVLLVTICLAVFPYQGSS. The propeptide occupies 21 to 191; it reads IILESGNVND…KASKLVVTAE (171 aa). Residue Gln192 is modified to Pyrrolidone carboxylic acid. In terms of domain architecture, Peptidase M12B spans 198-394; it reads RYIKLAIVVD…HKPQCILNAP (197 aa). An N-linked (GlcNAc...) asparagine glycan is attached at Asn264. Intrachain disulfides connect Cys309/Cys389, Cys349/Cys373, and Cys351/Cys356. His334 serves as a coordination point for Zn(2+). The active site involves Glu335. The Zn(2+) site is built by His338 and His344. Asn372 is a glycosylation site (N-linked (GlcNAc...) asparagine). The propeptide occupies 395-398; the sequence is SKTD. Positions 402 to 488 constitute a Disintegrin domain; the sequence is PPVCGNELLE…DCPTDRFHRN (87 aa). The Ca(2+) site is built by Val404, Asn407, Leu409, Glu411, Glu414, and Asp417. Disulfide bonds link Cys405/Cys424, Cys405/Cys434, Cys416/Cys429, Cys416/Cys434, Cys418/Cys424, Cys428/Cys451, Cys442/Cys448, Cys447/Cys473, Cys460/Cys480, Cys467/Cys492, Cys467/Cys499, Cys492/Cys504, Cys499/Cys504, Cys511/Cys526, Cys511/Cys561, Cys526/Cys568, Cys539/Cys549, Cys549/Cys556, Cys556/Cys593, Cys561/Cys568, Cys587/Cys598, and Cys593/Cys598. The short motif at 466-468 is the D/ECD-tripeptide element; that stretch reads ECD. Asn518 is a glycosylation site (N-linked (GlcNAc...) asparagine). Asn571 carries an N-linked (GlcNAc...) asparagine glycan. Positions 608-614 are excised as a propeptide; that stretch reads TTVFSLI.

This sequence belongs to the venom metalloproteinase (M12B) family. P-III subfamily. P-IIIb sub-subfamily. In terms of assembly, monomer. Zn(2+) serves as cofactor. As to expression, expressed by the venom gland.

It localises to the secreted. In terms of biological role, zinc protease that induces hemorrhage. Has preference for Tyr, Leu, Arg, Met, and Phe at the P1 position, in descending order (in vitro). Shows equal preference for the sequences of Ala-Asp and Arg-Ile at the P3-P2 position with different enzyme cleavage sites across the P1 position: the N-terminus side for Ala-Asp and the C-terminus side for Arg-Ile. Its function is as follows. Inhibits platelet aggregation induced by ADP, thrombin, platelet-activating factor and collagen. Acts by inhibiting fibrinogen interaction with platelet receptors alpha-IIb/beta-3 (ITGA2B/ITGB3). This chain is Zinc metalloproteinase-disintegrin-like HR1b, found in Protobothrops flavoviridis (Habu).